The primary structure comprises 224 residues: Urease accessory protein UreF (224 aa).

It belongs to the UreF family. As to quaternary structure, ureD, UreF and UreG form a complex that acts as a GTP-hydrolysis-dependent molecular chaperone, activating the urease apoprotein by helping to assemble the nickel containing metallocenter of UreC. The UreE protein probably delivers the nickel.

Its subcellular location is the cytoplasm. Its function is as follows. Required for maturation of urease via the functional incorporation of the urease nickel metallocenter. The sequence is that of Urease accessory protein UreF from Pseudomonas entomophila (strain L48).